Reading from the N-terminus, the 61-residue chain is Large ribosomal subunit protein uL30 (61 aa).

Residues M1–E20 are disordered.

This sequence belongs to the universal ribosomal protein uL30 family. As to quaternary structure, part of the 50S ribosomal subunit.

The protein is Large ribosomal subunit protein uL30 of Hyphomonas neptunium (strain ATCC 15444).